Consider the following 250-residue polypeptide: 3-deoxy-manno-octulosonate cytidylyltransferase (250 aa).

The protein belongs to the KdsB family.

The protein resides in the cytoplasm. The catalysed reaction is 3-deoxy-alpha-D-manno-oct-2-ulosonate + CTP = CMP-3-deoxy-beta-D-manno-octulosonate + diphosphate. It functions in the pathway nucleotide-sugar biosynthesis; CMP-3-deoxy-D-manno-octulosonate biosynthesis; CMP-3-deoxy-D-manno-octulosonate from 3-deoxy-D-manno-octulosonate and CTP: step 1/1. Its pathway is bacterial outer membrane biogenesis; lipopolysaccharide biosynthesis. Its function is as follows. Activates KDO (a required 8-carbon sugar) for incorporation into bacterial lipopolysaccharide in Gram-negative bacteria. The chain is 3-deoxy-manno-octulosonate cytidylyltransferase from Yersinia pseudotuberculosis serotype O:1b (strain IP 31758).